The sequence spans 541 residues: Sialate O-acetylesterase (541 aa).

An N-terminal signal peptide occupies residues 1 to 23; it reads MVSPGPVFGIVLLIIARVSRSAG. N-linked (GlcNAc...) asparagine glycosylation is found at N107, N138, N188, N293, N356, N427, N448, and N462.

As to quaternary structure, disulfide-linked heterodimer of a small subunit and a large subunit. The two subunits are derived from a single precursor by proteolytic cleavage. Post-translationally, the lysosomal isoform is glycosylated. Highly expressed in liver, testis, and kidney, whereas skeletal muscle, adipose tissue, and heart have lower levels. In terms of tissue distribution, highest expression in brain and ovary and lower levels in liver and thymus.

The protein localises to the lysosome. The protein resides in the cytoplasm. The catalysed reaction is N-acetyl-9-O-acetylneuraminate + H2O = N-acetylneuraminate + acetate + H(+). It carries out the reaction an Ac-O-9-sialoglycoconjugate + H2O = a sialoglycoconjugate + acetate + H(+). With respect to regulation, inhibited by diisopropyl fluorophosphate and diethyl-P-nitrophenyl phosphate. Its function is as follows. Catalyzes the removal of O-acetyl ester groups from position 9 of the free diacetylated sialate N-acetyl-9-O-acetylneuraminate (Neu5,9Ac2) in the cytosol and of the diacetylated sialate residues of sialylglycoconjugates in the lysosomes. Together with the sialate-O-acetyltransferase they regulate the balance of acetylated sialoglycoconjugates, key players in various processes such as cell-cell interactions, host-pathogen recognition, and tumor antigenicity. This is Sialate O-acetylesterase (Siae) from Mus musculus (Mouse).